A 347-amino-acid chain; its full sequence is Protein RecA (347 aa).

65–72 (GPESSGKT) provides a ligand contact to ATP.

The protein belongs to the RecA family.

The protein resides in the cytoplasm. Functionally, can catalyze the hydrolysis of ATP in the presence of single-stranded DNA, the ATP-dependent uptake of single-stranded DNA by duplex DNA, and the ATP-dependent hybridization of homologous single-stranded DNAs. It interacts with LexA causing its activation and leading to its autocatalytic cleavage. The protein is Protein RecA of Stutzerimonas stutzeri (Pseudomonas stutzeri).